A 627-amino-acid chain; its full sequence is MGKVLGIDLGTTNSAMAVYTNGEAAIIANKEGKNTTPSIVAFTDKGEVLVGESAKRQAVTNPEKTIYSIKRIMGLMCEEEKANEAKERLPYHIIDRNGACAIEVAGKTYTPQEISAKVLMKMKEDAEAYLGETVTDAVITVPAYFNDAQRKATKEAGTIAGLNVLRIINEPTSAALAYGLDKKEAEQIVVYDLGGGTFDVTALETGDGVVEVLATGGDAFLGGDDFDNRIIDYVADEFKSESGIDIKADVMALQRVKDAAEAAKKELSSATETEINLPFITADASGPKHLVTKITRAKFESLIGDLVAKTIKTIEAVLKDAGLSKNDVKEVVMVGGSTRVPLVQEEVKKFFNKELNKSVNPDEVVALGAAIQGGVLAGDVKDVLLLDVTPLSLGIETLGGVMTKVIEKGTTIPAKKSQIFSTAEDNQPAVSIHVLQGEREFAKDNKSLGMFELRDIPAAPRGVPQIEVTFDIDANGILTVSAVDKGTGKSQEIKITGSSGLSDEEIEKMVQDAEAHKAEDEKRKAVVEAKNQADALIHQTKKSLDDLGENFDANEKAGIEAAIADLETVLKDDNATKEQIDEKVKALTEKSHKLAEAAYAKEQGGQQGAADAGKKADDDDVIDAEVE.

A Phosphothreonine; by autocatalysis modification is found at Thr-197. A compositionally biased stretch (low complexity) spans Ala-598–Asp-611. Residues Ala-598 to Glu-627 form a disordered region. The segment covering Asp-618–Glu-627 has biased composition (acidic residues).

The protein belongs to the heat shock protein 70 family.

In terms of biological role, acts as a chaperone. The chain is Chaperone protein DnaK from Sulfurovum sp. (strain NBC37-1).